The following is a 216-amino-acid chain: Uracil phosphoribosyltransferase (216 aa).

Residues R85, R110, and 135–143 each bind 5-phospho-alpha-D-ribose 1-diphosphate; that span reads DPMVATGYS. Uracil is bound by residues I200 and 205–207; that span reads GDA. D206 contacts 5-phospho-alpha-D-ribose 1-diphosphate.

It belongs to the UPRTase family. Mg(2+) is required as a cofactor.

The catalysed reaction is UMP + diphosphate = 5-phospho-alpha-D-ribose 1-diphosphate + uracil. It functions in the pathway pyrimidine metabolism; UMP biosynthesis via salvage pathway; UMP from uracil: step 1/1. Allosterically activated by GTP. Functionally, catalyzes the conversion of uracil and 5-phospho-alpha-D-ribose 1-diphosphate (PRPP) to UMP and diphosphate. This Burkholderia vietnamiensis (strain G4 / LMG 22486) (Burkholderia cepacia (strain R1808)) protein is Uracil phosphoribosyltransferase.